The chain runs to 617 residues: Na(+)/H(+) antiporter NhaA 1 (617 aa).

Positions 1 to 433 (MTVTEQTTAR…GWAIFRITDW (433 aa)) are na(+)/H(+) antiporter NhaA. 11 helical membrane passes run 33–53 (AAAL…SPWA), 75–95 (MTVK…IVGL), 113–133 (AVPV…FLAF), 141–161 (HAWG…LAII), 171–191 (LFLL…IAVF), 194–214 (DAIQ…LALV), 234–254 (VALY…ALLI), 304–324 (VGPA…AGVL), 340–360 (WGVV…ATWL), 378–398 (IAGG…IVDI), and 411–431 (IGVL…FRIT). Residues 434-617 (LSPPEPVGLK…LIRALEAGRR (184 aa)) enclose the Thioredoxin domain.

The protein in the N-terminal section; belongs to the NhaA Na(+)/H(+) (TC 2.A.33) antiporter family.

The protein localises to the cell membrane. It carries out the reaction Na(+)(in) + 2 H(+)(out) = Na(+)(out) + 2 H(+)(in). Functionally, na(+)/H(+) antiporter that extrudes sodium in exchange for external protons. This Mycolicibacterium vanbaalenii (strain DSM 7251 / JCM 13017 / BCRC 16820 / KCTC 9966 / NRRL B-24157 / PYR-1) (Mycobacterium vanbaalenii) protein is Na(+)/H(+) antiporter NhaA 1.